A 265-amino-acid chain; its full sequence is Transcription factor LBX1 (265 aa).

The segment covering 1–20 (MTSKDEAKSSSVEERRRHAL) has biased composition (basic and acidic residues). The interval 1 to 33 (MTSKDEAKSSSVEERRRHALDLLPPPANSNKPL) is disordered. The segment at residues 125-184 (RRKSRTAFTNHQIYELEKRFLYQKYLSPADRDQIAQQLGLTNAQVITWFQNRRAKLKRDL) is a DNA-binding region (homeobox). The tract at residues 212–265 (EEETNSVRDDSRSRSPQLGLSGHMPLSPSSPLTEQHTSKECSEDEEDVEIDVDD) is disordered. Acidic residues predominate over residues 253–265 (SEDEEDVEIDVDD).

The protein localises to the nucleus. Functionally, transcription factor that controls hypaxial muscle development by down-regulating myod1 and cdkn1b/p27, thereby allowing myoblasts to proliferate before the onset of terminal differentiation. The sequence is that of Transcription factor LBX1 from Xenopus tropicalis (Western clawed frog).